Here is a 372-residue protein sequence, read N- to C-terminus: PqqA peptide cyclase (372 aa).

Residues 4–219 (APPPLSVLLE…VDTARRELGD (216 aa)) enclose the Radical SAM core domain. Residues C18, C22, and C25 each contribute to the [4Fe-4S] cluster site. The interval 342 to 372 (ATAEREAAAPAPEFIYRRPERPAPATADTLE) is disordered.

This sequence belongs to the radical SAM superfamily. PqqE family. As to quaternary structure, interacts with PqqD. The interaction is necessary for activity of PqqE. [4Fe-4S] cluster serves as cofactor.

The enzyme catalyses [PQQ precursor protein] + S-adenosyl-L-methionine = E-Y cross-linked-[PQQ precursor protein] + 5'-deoxyadenosine + L-methionine + H(+). Its pathway is cofactor biosynthesis; pyrroloquinoline quinone biosynthesis. In terms of biological role, catalyzes the cross-linking of a glutamate residue and a tyrosine residue in the PqqA protein as part of the biosynthesis of pyrroloquinoline quinone (PQQ). The sequence is that of PqqA peptide cyclase from Xanthomonas oryzae pv. oryzae (strain MAFF 311018).